The primary structure comprises 149 residues: Ribosome-binding factor A (149 aa).

The interval 124-149 (AKLREGAVPAGDADPYKTSSKSESEE) is disordered.

It belongs to the RbfA family. As to quaternary structure, monomer. Binds 30S ribosomal subunits, but not 50S ribosomal subunits or 70S ribosomes.

The protein resides in the cytoplasm. One of several proteins that assist in the late maturation steps of the functional core of the 30S ribosomal subunit. Associates with free 30S ribosomal subunits (but not with 30S subunits that are part of 70S ribosomes or polysomes). Required for efficient processing of 16S rRNA. May interact with the 5'-terminal helix region of 16S rRNA. This Corynebacterium glutamicum (strain R) protein is Ribosome-binding factor A.